Here is a 251-residue protein sequence, read N- to C-terminus: Probable transcriptional regulatory protein Francci3_1368 (251 aa).

Belongs to the TACO1 family.

It is found in the cytoplasm. The chain is Probable transcriptional regulatory protein Francci3_1368 from Frankia casuarinae (strain DSM 45818 / CECT 9043 / HFP020203 / CcI3).